The chain runs to 429 residues: MAVAVGRPSNEELRNLSLSGHVGFDSLPDQLVNKSTSQGFCFNILCVGETGIGKSTLMDTLFNTKFESDPATHNEPGVRLKARSYELQESNVRLKLTIVDTVGFGDQINKDDSYKPIVEYIDAQFEAYLQEELKIKRSLFNYHDTRIHACLYFIAPTGHSLKSLDLVTMKKLDSKVNIIPIIAKADTIAKNELHKFKSKIMSELVSNGVQIYQFPTDEETVAEINATMSVHLPFAVVGSTEEVKIGNKMAKARQYPWGVVQVENENHCDFVKLREMLIRVNMEDLREQTHTRHYELYRRCKLEEMGFKDTDPDSKPFSLQETYEAKRNEFLGELQKKEEEMRQMFVMRVKEKEAELKEAEKELHEKFDLLKRTHQEEKKKVEDKKKELEEEVNNFQKKKAAAQLLQSQAQQSGAQQTKKDKDKKNASFT.

Position 2 is an N-acetylalanine (A2). S9 carries the post-translational modification Phosphoserine. One can recognise a Septin-type G domain in the interval 38–304 (QGFCFNILCV…ELYRRCKLEE (267 aa)). The interval 48–55 (GETGIGKS) is G1 motif. GTP is bound by residues 48-55 (GETGIGKS), G103, 184-192 (KADTIAKNE), G238, and R253. The interval 100–103 (DTVG) is G3 motif. Residues 183–186 (AKAD) form a G4 motif region. A coiled-coil region spans residues 320 to 415 (QETYEAKRNE…QSQAQQSGAQ (96 aa)). A disordered region spans residues 398–429 (KKAAAQLLQSQAQQSGAQQTKKDKDKKNASFT). Positions 401-416 (AAQLLQSQAQQSGAQQ) are enriched in low complexity. The span at 417–429 (TKKDKDKKNASFT) shows a compositional bias: basic and acidic residues.

Belongs to the TRAFAC class TrmE-Era-EngA-EngB-Septin-like GTPase superfamily. Septin GTPase family. In terms of assembly, septins polymerize into heterooligomeric protein complexes that form filaments, and can associate with cellular membranes, actin filaments and microtubules. Forms homooligomers. GTPase activity is required for filament formation. Interacts with SEPTIN7, SEPTIN9 and SEPTIN12. Widely expressed, except in leukocytes.

It localises to the cytoplasm. The protein localises to the cytoskeleton. The protein resides in the synapse. It is found in the cell projection. Its subcellular location is the dendritic spine. It localises to the axon. Filament-forming cytoskeletal GTPase. May play a role in cytokinesis (Potential). May play a role in the cytoarchitecture of neurons, including dendritic arborization and dendritic spines, and in GABAergic synaptic connectivity. During Listeria monocytogenes infection, not required for the bacterial entry process, but restricts its efficacy. In Homo sapiens (Human), this protein is Septin-11.